Reading from the N-terminus, the 507-residue chain is Kunitz-type protease inhibitor 1 (507 aa).

Positions 1-29 are cleaved as a signal peptide; sequence MAGRRLARASISAVGVWLLCALGLQATEA. An MANSC domain is found at 51-134; sequence GVPSFVLDTE…FAPKEGFINY (84 aa). N229 carries N-linked (GlcNAc...) asparagine glycosylation. In terms of domain architecture, BPTI/Kunitz inhibitor 1 spans 244–294; that stretch reads CLASYKVGRCRGSFPRWYYDPKEQICKSFTFGGCLGNKNNYLREEECMLAC. Cystine bridges form between C244–C294, C253–C277, C269–C290, C320–C338, C332–C347, C369–C419, C378–C402, and C394–C415. An LDL-receptor class A domain is found at 312 to 348; the sequence is SCHATQFRCSNGCCIDGFLECDDTPDCPDGSDEATCE. Residues 369–419 enclose the BPTI/Kunitz inhibitor 2 domain; the sequence is CAELPDTGFCKENIPRWYYNPFSERCARFTYGGCYGNKNNFEEEQQCLESC. N-linked (GlcNAc...) asparagine glycosylation occurs at N501.

In terms of assembly, interacts with HGFAC. Interacts with TMPRSS13; the interaction promotes the phosphorylation and cell membrane localization of TMPRSS13.

The protein localises to the secreted. Its subcellular location is the cytoplasm. It localises to the cell membrane. Functionally, inhibitor of HGFAC. Inhibits serine protease activity of ST14/matriptase in vitro. Inhibits serine protease activity of TMPRSS13, via the BPTI/Kunitz inhibitor 1 domain. The chain is Kunitz-type protease inhibitor 1 (Spint1) from Mus musculus (Mouse).